A 424-amino-acid chain; its full sequence is Acetyl-CoA acetyltransferase, mitochondrial (424 aa).

The transit peptide at 1 to 30 (MAALVALHGVVRRPLLRGLLQEVRCLERSY) directs the protein to the mitochondrion. Lysine 63 carries the post-translational modification N6-acetyllysine; alternate. Lysine 63 carries the N6-succinyllysine; alternate modification. Residue lysine 75 is modified to N6-succinyllysine. Cysteine 123 serves as the catalytic Acyl-thioester intermediate. N6-acetyllysine; alternate occurs at positions 171, 178, 187, and 199. N6-succinyllysine; alternate occurs at positions 171, 178, 187, and 199. A Phosphoserine modification is found at serine 204. Tyrosine 216 lines the CoA pocket. Tyrosine 216 provides a ligand contact to K(+). An N6-acetyllysine; alternate mark is found at lysine 220 and lysine 227. 2 positions are modified to N6-succinyllysine; alternate: lysine 220 and lysine 227. N6-succinyllysine is present on lysine 240. Lysine 242 carries the N6-acetyllysine; alternate modification. At lysine 242 the chain carries N6-succinyllysine; alternate. Residues lysine 248 and lysine 254 each carry the N6-acetyllysine modification. Residues 255–257 (RVD) and lysine 260 contribute to the CoA site. Lysine 260 bears the N6-acetyllysine; alternate mark. Residue lysine 260 is modified to N6-succinyllysine; alternate. Residues lysine 263 and lysine 265 each carry the N6-succinyllysine modification. Lysine 270 is modified (N6-acetyllysine). K(+) is bound by residues alanine 277, alanine 278, and alanine 280. Serine 281 lines the CoA pocket. N6-acetyllysine is present on lysine 335. Position 378 (valine 378) interacts with K(+). Catalysis depends on cysteine 410, which acts as the Proton donor/acceptor.

Belongs to the thiolase-like superfamily. Thiolase family. Homotetramer. Post-translationally, succinylation at Lys-265, adjacent to a coenzyme A binding site. Desuccinylated by SIRT5.

Its subcellular location is the mitochondrion. It catalyses the reaction 2 acetyl-CoA = acetoacetyl-CoA + CoA. The enzyme catalyses propanoyl-CoA + acetyl-CoA = 2-methyl-3-oxobutanoyl-CoA + CoA. It functions in the pathway lipid metabolism; fatty acid beta-oxidation. Activated by potassium ions, but not sodium ions. Functionally, this is one of the enzymes that catalyzes the last step of the mitochondrial beta-oxidation pathway, an aerobic process breaking down fatty acids into acetyl-CoA. Using free coenzyme A/CoA, catalyzes the thiolytic cleavage of medium- to long-chain 3-oxoacyl-CoAs into acetyl-CoA and a fatty acyl-CoA shortened by two carbon atoms. The activity of the enzyme is reversible and it can also catalyze the condensation of two acetyl-CoA molecules into acetoacetyl-CoA. Thereby, it plays a major role in ketone body metabolism. The chain is Acetyl-CoA acetyltransferase, mitochondrial (Acat1) from Mus musculus (Mouse).